A 183-amino-acid chain; its full sequence is Crossover junction endodeoxyribonuclease RuvC (183 aa).

Residues aspartate 7, glutamate 66, and aspartate 138 contribute to the active site. Positions 7, 66, and 138 each coordinate Mg(2+).

This sequence belongs to the RuvC family. As to quaternary structure, homodimer which binds Holliday junction (HJ) DNA. The HJ becomes 2-fold symmetrical on binding to RuvC with unstacked arms; it has a different conformation from HJ DNA in complex with RuvA. In the full resolvosome a probable DNA-RuvA(4)-RuvB(12)-RuvC(2) complex forms which resolves the HJ. The cofactor is Mg(2+).

It is found in the cytoplasm. The enzyme catalyses Endonucleolytic cleavage at a junction such as a reciprocal single-stranded crossover between two homologous DNA duplexes (Holliday junction).. Its function is as follows. The RuvA-RuvB-RuvC complex processes Holliday junction (HJ) DNA during genetic recombination and DNA repair. Endonuclease that resolves HJ intermediates. Cleaves cruciform DNA by making single-stranded nicks across the HJ at symmetrical positions within the homologous arms, yielding a 5'-phosphate and a 3'-hydroxyl group; requires a central core of homology in the junction. The consensus cleavage sequence is 5'-(A/T)TT(C/G)-3'. Cleavage occurs on the 3'-side of the TT dinucleotide at the point of strand exchange. HJ branch migration catalyzed by RuvA-RuvB allows RuvC to scan DNA until it finds its consensus sequence, where it cleaves and resolves the cruciform DNA. The sequence is that of Crossover junction endodeoxyribonuclease RuvC from Burkholderia ambifaria (strain ATCC BAA-244 / DSM 16087 / CCUG 44356 / LMG 19182 / AMMD) (Burkholderia cepacia (strain AMMD)).